A 126-amino-acid polypeptide reads, in one-letter code: MDVSLPCIKIQVQTRYIEEQSNPEYQRFVFAYLITIKNLSSQTVQLMSRRWLITDADGKQTVVEGDGVVGEQPRIKANDEYTYSSGTALDTPVGVMQGQYLMIDEQGESFTVEIEPFRLAVPHVLN.

One can recognise an ApaG domain in the interval 2 to 126 (DVSLPCIKIQ…FRLAVPHVLN (125 aa)).

In Vibrio cholerae serotype O1 (strain ATCC 39541 / Classical Ogawa 395 / O395), this protein is Protein ApaG.